Consider the following 150-residue polypeptide: MAIYQIVEIGSEVLREKAVPVKEITPNIAKLLDNMLDTLYDANGVGLAAPQVGVSKRVVVIDVGEGPLELINPVIIAKEGEDLDDEGCLSIPGITGQVARAAKVKVEALNRQGELQVIEGEGLLSRCLQHEIDHLEGILFVDKAKKTSRR.

Positions 88 and 130 each coordinate Fe cation. The active site involves Glu131. His134 contributes to the Fe cation binding site.

This sequence belongs to the polypeptide deformylase family. Fe(2+) serves as cofactor.

The enzyme catalyses N-terminal N-formyl-L-methionyl-[peptide] + H2O = N-terminal L-methionyl-[peptide] + formate. Removes the formyl group from the N-terminal Met of newly synthesized proteins. Requires at least a dipeptide for an efficient rate of reaction. N-terminal L-methionine is a prerequisite for activity but the enzyme has broad specificity at other positions. The sequence is that of Peptide deformylase from Desulfitobacterium hafniense (strain DSM 10664 / DCB-2).